The primary structure comprises 329 residues: MAVTMAEITKLRKISGAGMMDCKNALTEANGDIDKAMEIIRKKGQAVAAKRSDREASEGCVLAKKDGEFAAIIALKCETDFVAKNADFVALTQAILDAAVANRCKTLEEVKALPMGNGTVQDAVTDRSGITGEKMELDGYNVVEGAYTSIYNHQGNNQLCTIVAMNKEAEAAAHGVAMQIAAMNPIAIDEAGVPESVKEAEIQVAIDKTKKEQVDKAVEVALKKAGINPAHVDSEEHMESNKAKGWITDEDIAKAKEIIATVSAEKAANLPQQMIENIAKGRLGKFLKEVCLLNQEDIMDGKKTVREVLKEADPELQIVAFKRFTLRAE.

Positions 79–82 are involved in Mg(2+) ion dislocation from EF-Tu; sequence TDFV.

The protein belongs to the EF-Ts family.

It localises to the cytoplasm. Associates with the EF-Tu.GDP complex and induces the exchange of GDP to GTP. It remains bound to the aminoacyl-tRNA.EF-Tu.GTP complex up to the GTP hydrolysis stage on the ribosome. In Phocaeicola vulgatus (strain ATCC 8482 / DSM 1447 / JCM 5826 / CCUG 4940 / NBRC 14291 / NCTC 11154) (Bacteroides vulgatus), this protein is Elongation factor Ts.